A 1798-amino-acid polypeptide reads, in one-letter code: Focadhesin (1798 aa).

Residue K816 is modified to N6-acetyllysine.

As to quaternary structure, interacts with VCL. In terms of tissue distribution, expressed by glial and neuronal cells in brain.

Its subcellular location is the cell junction. The protein resides in the focal adhesion. It localises to the cytoplasm. The protein localises to the cytosol. In terms of biological role, required for the maintenance of SKIC2 and SKIC3 proteostatic levels in the liver. May be involved in the regulation of RNA degradation by the exosome complex. Potential tumor suppressor in gliomas. The sequence is that of Focadhesin (Focad) from Mus musculus (Mouse).